Here is a 288-residue protein sequence, read N- to C-terminus: Elongation factor Ts (288 aa).

The involved in Mg(2+) ion dislocation from EF-Tu stretch occupies residues 82 to 85 (TDFV).

Belongs to the EF-Ts family.

Its subcellular location is the cytoplasm. Associates with the EF-Tu.GDP complex and induces the exchange of GDP to GTP. It remains bound to the aminoacyl-tRNA.EF-Tu.GTP complex up to the GTP hydrolysis stage on the ribosome. The chain is Elongation factor Ts from Pelodictyon phaeoclathratiforme (strain DSM 5477 / BU-1).